The sequence spans 208 residues: N-(5'-phosphoribosyl)anthranilate isomerase (208 aa).

The protein belongs to the TrpF family.

It catalyses the reaction N-(5-phospho-beta-D-ribosyl)anthranilate = 1-(2-carboxyphenylamino)-1-deoxy-D-ribulose 5-phosphate. Its pathway is amino-acid biosynthesis; L-tryptophan biosynthesis; L-tryptophan from chorismate: step 3/5. This chain is N-(5'-phosphoribosyl)anthranilate isomerase, found in Chlamydia trachomatis serovar A (strain ATCC VR-571B / DSM 19440 / HAR-13).